The following is a 550-amino-acid chain: Transcriptional repressor RHIT (550 aa).

Disordered regions lie at residues methionine 1–alanine 67, valine 174–valine 200, and lysine 216–alanine 296. Composition is skewed to basic and acidic residues over residues alanine 11–glycine 22, glutamate 45–proline 58, and leucine 187–valine 200. The 70-residue stretch at valine 124–glutamate 193 folds into the KRAB domain. Residue lysine 216 forms a Glycyl lysine isopeptide (Lys-Gly) (interchain with G-Cter in SUMO2) linkage. Residues aspartate 267–arginine 281 show a composition bias toward basic and acidic residues. Serine 290 carries the post-translational modification Phosphoserine. C2H2-type zinc fingers lie at residues tyrosine 306 to histidine 328, tyrosine 334 to histidine 356, tyrosine 362 to histidine 384, tyrosine 390 to histidine 412, histidine 418 to histidine 440, tyrosine 446 to histidine 468, tyrosine 474 to histidine 496, and tyrosine 502 to histidine 524.

The protein belongs to the krueppel C2H2-type zinc-finger protein family.

The protein resides in the nucleus. Its function is as follows. Transcriptional repressor involved in regulating MPV17L expression. By regulating MPV17L expression, contributes to the regulation of genes involved in H(2)O(2) metabolism and the mitochondrial apoptotic cascade. This Bos taurus (Bovine) protein is Transcriptional repressor RHIT (ZNF205).